The following is a 413-amino-acid chain: Imidazolonepropionase (413 aa).

2 residues coordinate Fe(3+): His70 and His72. His70 and His72 together coordinate Zn(2+). Residues Arg79, Tyr142, and His175 each coordinate 4-imidazolone-5-propanoate. Residue Tyr142 participates in N-formimidoyl-L-glutamate binding. Residue His240 participates in Fe(3+) binding. Zn(2+) is bound at residue His240. Glu243 is a binding site for 4-imidazolone-5-propanoate. Asp315 is a binding site for Fe(3+). Asp315 serves as a coordination point for Zn(2+). Asn317 and Gly319 together coordinate N-formimidoyl-L-glutamate. A 4-imidazolone-5-propanoate-binding site is contributed by Ser320.

Belongs to the metallo-dependent hydrolases superfamily. HutI family. Zn(2+) serves as cofactor. The cofactor is Fe(3+).

It localises to the cytoplasm. The catalysed reaction is 4-imidazolone-5-propanoate + H2O = N-formimidoyl-L-glutamate. The protein operates within amino-acid degradation; L-histidine degradation into L-glutamate; N-formimidoyl-L-glutamate from L-histidine: step 3/3. Catalyzes the hydrolytic cleavage of the carbon-nitrogen bond in imidazolone-5-propanoate to yield N-formimidoyl-L-glutamate. It is the third step in the universal histidine degradation pathway. This Treponema denticola (strain ATCC 35405 / DSM 14222 / CIP 103919 / JCM 8153 / KCTC 15104) protein is Imidazolonepropionase.